The sequence spans 133 residues: Small ribosomal subunit protein uS8 (133 aa).

Belongs to the universal ribosomal protein uS8 family. As to quaternary structure, part of the 30S ribosomal subunit. Contacts proteins S5 and S12.

Functionally, one of the primary rRNA binding proteins, it binds directly to 16S rRNA central domain where it helps coordinate assembly of the platform of the 30S subunit. The polypeptide is Small ribosomal subunit protein uS8 (Prochlorococcus marinus (strain MIT 9215)).